Here is a 171-residue protein sequence, read N- to C-terminus: Peptide deformylase (171 aa).

The Fe cation site is built by Cys91 and His133. Residue Glu134 is part of the active site. Position 137 (His137) interacts with Fe cation.

This sequence belongs to the polypeptide deformylase family. Fe(2+) is required as a cofactor.

The enzyme catalyses N-terminal N-formyl-L-methionyl-[peptide] + H2O = N-terminal L-methionyl-[peptide] + formate. Functionally, removes the formyl group from the N-terminal Met of newly synthesized proteins. Requires at least a dipeptide for an efficient rate of reaction. N-terminal L-methionine is a prerequisite for activity but the enzyme has broad specificity at other positions. The sequence is that of Peptide deformylase from Edwardsiella ictaluri (strain 93-146).